The following is a 125-amino-acid chain: Acidic phospholipase A2 6 (125 aa).

Serine 1 is a signal peptide. Positions 2–7 (NRPMPL) are excised as a propeptide. Intrachain disulfides connect cysteine 18/cysteine 77, cysteine 33/cysteine 124, cysteine 35/cysteine 50, cysteine 49/cysteine 105, cysteine 56/cysteine 98, cysteine 66/cysteine 91, and cysteine 84/cysteine 96. Position 30 (aspartate 30) interacts with Zn(2+). 2 residues coordinate Ca(2+): tyrosine 34 and glycine 36. Histidine 53 is an active-site residue. Ca(2+) is bound at residue aspartate 54. Residue aspartate 99 is part of the active site.

As to quaternary structure, heterodimer formed between isoform 5 and isoform 6 in presence of zinc ion and monomer in absence of zinc ion. Ca(2+) serves as cofactor. Expressed by the venom gland.

The protein localises to the secreted. The catalysed reaction is a 1,2-diacyl-sn-glycero-3-phosphocholine + H2O = a 1-acyl-sn-glycero-3-phosphocholine + a fatty acid + H(+). In terms of biological role, PLA2 catalyzes the calcium-dependent hydrolysis of the 2-acyl groups in 3-sn-phosphoglycerides. The sequence is that of Acidic phospholipase A2 6 from Naja sagittifera (Andaman cobra).